A 369-amino-acid chain; its full sequence is C-C chemokine receptor type 9 (369 aa).

Topologically, residues 1-48 are extracellular; sequence MTPTDFTSPIPNMADDYGSESTSSMEDYVNFNFTDFYCEKNNVRQFAS. N32 carries an N-linked (GlcNAc...) asparagine glycan. Cystine bridges form between C38-C289 and C119-C198. A helical membrane pass occupies residues 49 to 74; it reads HFLPPLYWLVFIVGALGNSLVILVYW. Over 75-85 the chain is Cytoplasmic; it reads YCTRVKTMTDM. Residues 86–109 traverse the membrane as a helical segment; sequence FLLNLAIADLLFLVTLPFWAIAAA. Topologically, residues 110–120 are extracellular; that stretch reads DQWKFQTFMCK. Residues 121-150 form a helical membrane-spanning segment; the sequence is VVNSMYKMNFYSCVLLIMCISVDRYIAIAQ. The Cytoplasmic portion of the chain corresponds to 151-159; the sequence is AMRAHTWRE. A helical membrane pass occupies residues 160-185; sequence KRLLYSKMVCFTIWVLAAALCIPEIL. The Extracellular segment spans residues 186–208; it reads YSQIKEESGIAICTMVYPSDEST. The chain crosses the membrane as a helical span at residues 209 to 243; it reads KLKSAVLTLKVILGFFLPFVVMACCYTIIIHTLIQ. Residues 244 to 248 lie on the Cytoplasmic side of the membrane; that stretch reads AKKSS. Residues 249 to 283 form a helical membrane-spanning segment; it reads KHKALKVTITVLTVFVLSQFPYNCILLVQTIDAYA. Residues 284 to 290 are Extracellular-facing; that stretch reads MFISNCA. Residues 291 to 321 form a helical membrane-spanning segment; sequence VSTNIDICFQVTQTIAFFHSCLNPVLYVFVG. Residues 322-369 are Cytoplasmic-facing; sequence ERFRRDLVKTLKNLGCISQAQWVSFTRREGSLKLSSMLLETTSGALSL.

Belongs to the G-protein coupled receptor 1 family. In terms of tissue distribution, highly expressed in the thymus and low in lymph nodes and spleen.

The protein localises to the cell membrane. Receptor for chemokine SCYA25/TECK. Subsequently transduces a signal by increasing the intracellular calcium ions level. In terms of biological role, (Microbial infection) Alternative coreceptor with CD4 for HIV-1 infection. This Homo sapiens (Human) protein is C-C chemokine receptor type 9 (CCR9).